The following is a 484-amino-acid chain: Threonine synthase-like 2 (484 aa).

Residue Lys113 is modified to N6-(pyridoxal phosphate)lysine.

The protein belongs to the threonine synthase family. The cofactor is pyridoxal 5'-phosphate.

Functionally, acts as a catabolic phospho-lyase on both gamma- and beta-phosphorylated substrates. Degrades O-phospho-threonine (PThr) to alpha-ketobutyrate, ammonia and phosphate. The sequence is that of Threonine synthase-like 2 (THNSL2) from Pongo abelii (Sumatran orangutan).